The sequence spans 262 residues: Tryptophan synthase alpha chain (262 aa).

Catalysis depends on proton acceptor residues Glu48 and Asp59.

Belongs to the TrpA family. In terms of assembly, tetramer of two alpha and two beta chains.

The enzyme catalyses (1S,2R)-1-C-(indol-3-yl)glycerol 3-phosphate + L-serine = D-glyceraldehyde 3-phosphate + L-tryptophan + H2O. The protein operates within amino-acid biosynthesis; L-tryptophan biosynthesis; L-tryptophan from chorismate: step 5/5. Its function is as follows. The alpha subunit is responsible for the aldol cleavage of indoleglycerol phosphate to indole and glyceraldehyde 3-phosphate. The chain is Tryptophan synthase alpha chain from Helicobacter pylori (strain G27).